A 94-amino-acid chain; its full sequence is Aspartyl/glutamyl-tRNA(Asn/Gln) amidotransferase subunit C (94 aa).

It belongs to the GatC family. Heterotrimer of A, B and C subunits.

It carries out the reaction L-glutamyl-tRNA(Gln) + L-glutamine + ATP + H2O = L-glutaminyl-tRNA(Gln) + L-glutamate + ADP + phosphate + H(+). The catalysed reaction is L-aspartyl-tRNA(Asn) + L-glutamine + ATP + H2O = L-asparaginyl-tRNA(Asn) + L-glutamate + ADP + phosphate + 2 H(+). In terms of biological role, allows the formation of correctly charged Asn-tRNA(Asn) or Gln-tRNA(Gln) through the transamidation of misacylated Asp-tRNA(Asn) or Glu-tRNA(Gln) in organisms which lack either or both of asparaginyl-tRNA or glutaminyl-tRNA synthetases. The reaction takes place in the presence of glutamine and ATP through an activated phospho-Asp-tRNA(Asn) or phospho-Glu-tRNA(Gln). The polypeptide is Aspartyl/glutamyl-tRNA(Asn/Gln) amidotransferase subunit C (Desulfatibacillum aliphaticivorans).